We begin with the raw amino-acid sequence, 777 residues long: Rho guanine nucleotide exchange factor 38 (777 aa).

The residue at position 34 (T34) is a Phosphothreonine. Residues 35-72 (DTVVESSVSGDHSGTLRRSQSDRTEYNQKLQEKMTPQG) are disordered. Residues 37-52 (VVESSVSGDHSGTLRR) are compositionally biased toward polar residues. A compositionally biased stretch (basic and acidic residues) spans 53 to 66 (SQSDRTEYNQKLQE). In terms of domain architecture, DH spans 94–285 (KREKIIKELI…KDINVNINEL (192 aa)). Residues 327 to 536 (LKILTRGESQ…QNQVLEEIQN (210 aa)) form the BAR domain. Residues 582-645 (SAEELYQAKR…YSSFLKPYNP (64 aa)) enclose the SH3 1 domain. A disordered region spans residues 673–694 (PASDSVTGTSESSIGDSSSSLS). A compositionally biased stretch (low complexity) spans 679 to 694 (TGTSESSIGDSSSSLS). Residues 713–776 (VDEQIFYAVH…PANYLGKMTY (64 aa)) form the SH3 2 domain.

Functionally, may act as a guanine-nucleotide releasing factor. The sequence is that of Rho guanine nucleotide exchange factor 38 (ARHGEF38) from Homo sapiens (Human).